We begin with the raw amino-acid sequence, 91 residues long: Large ribosomal subunit protein uL29 (91 aa).

The segment at 67 to 91 (AAPLAESSAPAKTKSRARKSKKEAL) is disordered. The span at 79 to 91 (TKSRARKSKKEAL) shows a compositional bias: basic residues.

This sequence belongs to the universal ribosomal protein uL29 family.

The protein is Large ribosomal subunit protein uL29 of Acidobacterium capsulatum (strain ATCC 51196 / DSM 11244 / BCRC 80197 / JCM 7670 / NBRC 15755 / NCIMB 13165 / 161).